The sequence spans 353 residues: Outer membrane protein P5 (353 aa).

The first 21 residues, 1 to 21 (MKKTAIALVVAGLAAASVAQA), serve as a signal peptide directing secretion. 8 beta stranded membrane-spanning segments follow: residues 27–37 (TFYAGVKAGQA), 58–69 (SFTYGVFGGYQI), 77–85 (LAVELGYDD), 104–115 (HGTHLSLKGSYE), 120–128 (LDVYGKAGV), 158–167 (GLFAVGAEYA), 172–179 (LAVRLEYQ), and 205–213 (SINAGISYR). An OmpA-like domain is found at 227–353 (VVSKTFSLNS…RVEIAVNGTK (127 aa)). Cysteines 326 and 338 form a disulfide.

Belongs to the outer membrane OOP (TC 1.B.6) superfamily. OmpA family. Monomer and homodimer.

The protein localises to the cell outer membrane. With TolR probably plays a role in maintaining the position of the peptidoglycan cell wall in the periplasm. Acts as a porin with low permeability that allows slow penetration of small solutes; an internal gate slows down solute passage. In terms of biological role, reconstitution in planar bilayers with lithium dodecyl sulfate-solublized P5 yields narrow pores (58 pS conductance) with a low probability of opening, whereas n-octyl-bD-glucopyranoside-solubilized P5 forms large pores (1.1 nS conductance) with high open probability. The large pore easily converts to the smaller pore at room temperature; at 42 degrees Celsius the smaller pore converts to the larger one. This is Outer membrane protein P5 from Haemophilus influenzae (strain ATCC 51907 / DSM 11121 / KW20 / Rd).